A 258-amino-acid polypeptide reads, in one-letter code: Snake venom serine protease KN12 (258 aa).

A signal peptide spans 1–18 (MVLIRVLANLLILQLSYA). A propeptide spanning residues 19 to 24 (QRSSEL) is cleaved from the precursor. Positions 25-249 (VIGGDECNIN…HLDWIQNIIA (225 aa)) constitute a Peptidase S1 domain. 6 cysteine pairs are disulfide-bonded: Cys-31-Cys-163, Cys-50-Cys-66, Cys-98-Cys-256, Cys-142-Cys-210, Cys-174-Cys-189, and Cys-200-Cys-225. His-65 serves as the catalytic Charge relay system. A glycan (N-linked (GlcNAc...) asparagine) is linked at Asn-103. The active-site Charge relay system is Asp-110. Residues Asn-121, Asn-122, Asn-154, and Asn-170 are each glycosylated (N-linked (GlcNAc...) asparagine). Ser-204 (charge relay system) is an active-site residue. Asn-251 carries an N-linked (GlcNAc...) asparagine glycan.

Belongs to the peptidase S1 family. Snake venom subfamily. In terms of assembly, monomer. Expressed by the venom gland.

The protein localises to the secreted. Its function is as follows. Snake venom serine protease that may act in the hemostasis system of the prey. This is Snake venom serine protease KN12 from Trimeresurus stejnegeri (Chinese green tree viper).